Reading from the N-terminus, the 541-residue chain is Light-independent protochlorophyllide reductase subunit B (541 aa).

D36 is a [4Fe-4S] cluster binding site. D287 serves as the catalytic Proton donor. 422–423 (GL) contacts substrate.

The protein belongs to the ChlB/BchB/BchZ family. As to quaternary structure, protochlorophyllide reductase is composed of three subunits; BchL, BchN and BchB. Forms a heterotetramer of two BchB and two BchN subunits. [4Fe-4S] cluster serves as cofactor.

The catalysed reaction is chlorophyllide a + oxidized 2[4Fe-4S]-[ferredoxin] + 2 ADP + 2 phosphate = protochlorophyllide a + reduced 2[4Fe-4S]-[ferredoxin] + 2 ATP + 2 H2O. It functions in the pathway porphyrin-containing compound metabolism; bacteriochlorophyll biosynthesis (light-independent). Component of the dark-operative protochlorophyllide reductase (DPOR) that uses Mg-ATP and reduced ferredoxin to reduce ring D of protochlorophyllide (Pchlide) to form chlorophyllide a (Chlide). This reaction is light-independent. The NB-protein (BchN-BchB) is the catalytic component of the complex. The sequence is that of Light-independent protochlorophyllide reductase subunit B from Rhodopseudomonas palustris (strain HaA2).